The chain runs to 255 residues: Thiazole synthase (255 aa).

The Schiff-base intermediate with DXP role is filled by K97. 1-deoxy-D-xylulose 5-phosphate-binding positions include G158, A184–G185, and N206–T207.

The protein belongs to the ThiG family. As to quaternary structure, homotetramer. Forms heterodimers with either ThiH or ThiS.

Its subcellular location is the cytoplasm. The enzyme catalyses [ThiS sulfur-carrier protein]-C-terminal-Gly-aminoethanethioate + 2-iminoacetate + 1-deoxy-D-xylulose 5-phosphate = [ThiS sulfur-carrier protein]-C-terminal Gly-Gly + 2-[(2R,5Z)-2-carboxy-4-methylthiazol-5(2H)-ylidene]ethyl phosphate + 2 H2O + H(+). Its pathway is cofactor biosynthesis; thiamine diphosphate biosynthesis. Its function is as follows. Catalyzes the rearrangement of 1-deoxy-D-xylulose 5-phosphate (DXP) to produce the thiazole phosphate moiety of thiamine. Sulfur is provided by the thiocarboxylate moiety of the carrier protein ThiS. In vitro, sulfur can be provided by H(2)S. In Moorella thermoacetica (strain ATCC 39073 / JCM 9320), this protein is Thiazole synthase.